The chain runs to 117 residues: Prefoldin subunit beta (117 aa).

Belongs to the prefoldin subunit beta family. As to quaternary structure, heterohexamer of two alpha and four beta subunits.

Its subcellular location is the cytoplasm. Functionally, molecular chaperone capable of stabilizing a range of proteins. Seems to fulfill an ATP-independent, HSP70-like function in archaeal de novo protein folding. This chain is Prefoldin subunit beta, found in Thermococcus gammatolerans (strain DSM 15229 / JCM 11827 / EJ3).